Consider the following 615-residue polypeptide: DNA mismatch repair protein MutL (615 aa).

The tract at residues 363 to 397 (FAEPAAREPVAPRYTPAPASGSRPAAPWPNAQPGY) is disordered. Residues 364 to 391 (AEPAAREPVAPRYTPAPASGSRPAAPWP) show a composition bias toward low complexity.

It belongs to the DNA mismatch repair MutL/HexB family.

Its function is as follows. This protein is involved in the repair of mismatches in DNA. It is required for dam-dependent methyl-directed DNA mismatch repair. May act as a 'molecular matchmaker', a protein that promotes the formation of a stable complex between two or more DNA-binding proteins in an ATP-dependent manner without itself being part of a final effector complex. The chain is DNA mismatch repair protein MutL from Escherichia coli O8 (strain IAI1).